The sequence spans 392 residues: Speckle-type POZ protein-like B (392 aa).

The MATH domain occupies 31 to 161 (KFSYMWTINN…DDKLTLFCEV (131 aa)). A BTB domain is found at 200–267 (TDCSLFVGGQ…IYTGKAPNLE (68 aa)).

The protein belongs to the Tdpoz family. In terms of assembly, homodimer. Heterodimer with SPOP. Component of cullin-RING-based BCR (BTB-CUL3-RBX1) E3 ubiquitin-protein ligase complexes containing homodimeric SPOPL or the heterodimer formed by SPOP and SPOPL.

The protein localises to the nucleus. Its pathway is protein modification; protein ubiquitination. Its function is as follows. Component of a cullin-RING-based BCR (BTB-CUL3-RBX1) E3 ubiquitin-protein ligase complex that mediates the ubiquitination and subsequent proteasomal degradation of target proteins, but with relatively low efficiency. This chain is Speckle-type POZ protein-like B (spoplb), found in Danio rerio (Zebrafish).